The primary structure comprises 342 residues: MSRAMGLKINRPRRGSMGVYPRKRAADIVPRVRTWPEVNLGKPTLLGFAAYKAGMLHAVVVEDRPTSPLYGKEVVKAVTVLDAPPLFIWGFRLYTLDPTNGYKRSIAEVWAPELPAYLRRVLTLPEKVDVDKQMKKVEEFKDVAVDVRALVATQPHLSGIGKKTPELLEIPIGGVPSVDERIKFAVSLLGKTVSPKEVFTAGQLVDVIAVTKGKGYQGVIKRFGVTILPRWHKHRKGHRRTGTIGPQAPAVMFTQPRPGQMGFHQRTEYNKRIIKIGDNGAEITPKSGFLHYGVVKGPYILIQGTVPGARKRLVVLRYPVRPPKKAPPAAEPQVVWISSQSI.

Belongs to the universal ribosomal protein uL3 family. In terms of assembly, part of the 50S ribosomal subunit. Forms a cluster with proteins L14 and L24e.

One of the primary rRNA binding proteins, it binds directly near the 3'-end of the 23S rRNA, where it nucleates assembly of the 50S subunit. The chain is Large ribosomal subunit protein uL3 from Pyrobaculum islandicum (strain DSM 4184 / JCM 9189 / GEO3).